The following is a 566-amino-acid chain: Oxygen-dependent choline dehydrogenase (566 aa).

Residue 7-36 (DYIICGAGSAGNVLATRLTEDPNVTVLLLE) participates in FAD binding. The disordered stretch occupies residues 182 to 204 (YQQEGFGPMDRTVTPKGRRASTA). Histidine 474 (proton acceptor) is an active-site residue.

The protein belongs to the GMC oxidoreductase family. Requires FAD as cofactor.

The catalysed reaction is choline + A = betaine aldehyde + AH2. It catalyses the reaction betaine aldehyde + NAD(+) + H2O = glycine betaine + NADH + 2 H(+). It functions in the pathway amine and polyamine biosynthesis; betaine biosynthesis via choline pathway; betaine aldehyde from choline (cytochrome c reductase route): step 1/1. Functionally, involved in the biosynthesis of the osmoprotectant glycine betaine. Catalyzes the oxidation of choline to betaine aldehyde and betaine aldehyde to glycine betaine at the same rate. This Burkholderia multivorans (strain ATCC 17616 / 249) protein is Oxygen-dependent choline dehydrogenase.